A 360-amino-acid polypeptide reads, in one-letter code: Phenylalanine--tRNA ligase alpha subunit (360 aa).

E260 is a Mg(2+) binding site.

The protein belongs to the class-II aminoacyl-tRNA synthetase family. Phe-tRNA synthetase alpha subunit type 1 subfamily. As to quaternary structure, tetramer of two alpha and two beta subunits. Requires Mg(2+) as cofactor.

Its subcellular location is the cytoplasm. It carries out the reaction tRNA(Phe) + L-phenylalanine + ATP = L-phenylalanyl-tRNA(Phe) + AMP + diphosphate + H(+). The sequence is that of Phenylalanine--tRNA ligase alpha subunit from Bradyrhizobium sp. (strain ORS 278).